The sequence spans 507 residues: ATP synthase subunit alpha, chloroplastic (507 aa).

ATP is bound at residue isoleucine 169–lysine 176.

The protein belongs to the ATPase alpha/beta chains family. F-type ATPases have 2 components, CF(1) - the catalytic core - and CF(0) - the membrane proton channel. CF(1) has five subunits: alpha(3), beta(3), gamma(1), delta(1), epsilon(1). CF(0) has four main subunits: a, b, b' and c.

Its subcellular location is the plastid. It localises to the chloroplast thylakoid membrane. The catalysed reaction is ATP + H2O + 4 H(+)(in) = ADP + phosphate + 5 H(+)(out). Produces ATP from ADP in the presence of a proton gradient across the membrane. The alpha chain is a regulatory subunit. This chain is ATP synthase subunit alpha, chloroplastic, found in Saccharum hybrid (Sugarcane).